We begin with the raw amino-acid sequence, 1097 residues long: UPF0746 protein DDB_G0281095 (1097 aa).

Residues 1–11 (MVNNNKRKEIE) are compositionally biased toward basic and acidic residues. The tract at residues 1-24 (MVNNNKRKEIENQENDNDDDNDGL) is disordered. Positions 12–22 (NQENDNDDDND) are enriched in acidic residues. The SAP domain maps to 35-69 (YDSIRSKELQTIAKSLGLPNNGKKQEVYKRIEGYF). Positions 329–521 (FKEIREIHQQ…QLILELNEIQ (193 aa)) form a coiled coil.

It belongs to the UPF0746 family.

The chain is UPF0746 protein DDB_G0281095 from Dictyostelium discoideum (Social amoeba).